Here is a 95-residue protein sequence, read N- to C-terminus: Complement inhibitor RaCI5 (95 aa).

An N-terminal signal peptide occupies residues 1 to 21 (MNAVIVLCVTISAVLIHQCYS). Disulfide bonds link cysteine 35–cysteine 59, cysteine 40–cysteine 61, and cysteine 55–cysteine 76.

It belongs to the RaCI family. Expressed in salivary glands.

It is found in the secreted. Functionally, complement inhibitor. Prevents complement-mediated C5 activation by binding to C5. Binds C5 at a different binding site than the other tick complement inhibitors OmCI and CirpT1, and the drug eculizumab. The polypeptide is Complement inhibitor RaCI5 (Rhipicephalus appendiculatus (Brown ear tick)).